We begin with the raw amino-acid sequence, 569 residues long: Proline--tRNA ligase (569 aa).

This sequence belongs to the class-II aminoacyl-tRNA synthetase family. ProS type 1 subfamily. Homodimer.

It localises to the cytoplasm. The catalysed reaction is tRNA(Pro) + L-proline + ATP = L-prolyl-tRNA(Pro) + AMP + diphosphate. Catalyzes the attachment of proline to tRNA(Pro) in a two-step reaction: proline is first activated by ATP to form Pro-AMP and then transferred to the acceptor end of tRNA(Pro). As ProRS can inadvertently accommodate and process non-cognate amino acids such as alanine and cysteine, to avoid such errors it has two additional distinct editing activities against alanine. One activity is designated as 'pretransfer' editing and involves the tRNA(Pro)-independent hydrolysis of activated Ala-AMP. The other activity is designated 'posttransfer' editing and involves deacylation of mischarged Ala-tRNA(Pro). The misacylated Cys-tRNA(Pro) is not edited by ProRS. This Campylobacter jejuni (strain RM1221) protein is Proline--tRNA ligase.